Consider the following 697-residue polypeptide: Potassium-transporting ATPase ATP-binding subunit (697 aa).

Helical transmembrane passes span 55 to 75, 79 to 99, 245 to 265, and 271 to 291; these read PIMFVVEIGFIITFILSFLPS, SIPGWFNITVSLILLFTVLFA, LTLIFLIVVVTLPIFTNYLGF, and VLVALLVCLIPTTIGGLLSAI. Asp324 acts as the 4-aspartylphosphate intermediate in catalysis. ATP-binding positions include Asp361, Glu365, 393-400, and Lys412; that span reads FKAETRMS. Mg(2+) is bound by residues Asp535 and Asp539. 3 consecutive transmembrane segments (helical) span residues 605–625, 633–653, and 677–697; these read FAIIPAMFTLAIPQMEALNIM, AILSALIFNAVIIPLLIPLAM, and GGVIVPFIGIKVIDIIVGLFI.

It belongs to the cation transport ATPase (P-type) (TC 3.A.3) family. Type IA subfamily. As to quaternary structure, the system is composed of three essential subunits: KdpA, KdpB and KdpC.

It localises to the cell membrane. It catalyses the reaction K(+)(out) + ATP + H2O = K(+)(in) + ADP + phosphate + H(+). In terms of biological role, part of the high-affinity ATP-driven potassium transport (or Kdp) system, which catalyzes the hydrolysis of ATP coupled with the electrogenic transport of potassium into the cytoplasm. This subunit is responsible for energy coupling to the transport system and for the release of the potassium ions to the cytoplasm. In Bacillus cereus (strain G9842), this protein is Potassium-transporting ATPase ATP-binding subunit.